The following is a 482-amino-acid chain: MVTTMDPSRISRIVAVVFVLVIQVVSGNFVFNVTHKFAGKEKQLSELKSHDSFRHARMLANIDLPLGGDSRADSIGLYFTKIKLGSPPKEYYVQVDTGSDILWVNCAPCPKCPVKTDLGIPLSLYDSKTSSTSKNVGCEDDFCSFIMQSETCGAKKPCSYHVVYGDGSTSDGDFIKDNITLEQVTGNLRTAPLAQEVVFGCGKNQSGQLGQTDSAVDGIMGFGQSNTSIISQLAAGGSTKRIFSHCLDNMNGGGIFAVGEVESPVVKTTPIVPNQVHYNVILKGMDVDGDPIDLPPSLASTNGDGGTIIDSGTTLAYLPQNLYNSLIEKITAKQQVKLHMVQETFACFSFTSNTDKAFPVVNLHFEDSLKLSVYPHDYLFSLREDMYCFGWQSGGMTTQDGADVILLGDLVLSNKLVVYDLENEVIGWADHNCSSSIKVKDGSGAAYQLGAENLISAASSVMNGTLVTLLSILIWVFHSFTS.

An N-terminal signal peptide occupies residues 1 to 27; it reads MVTTMDPSRISRIVAVVFVLVIQVVSG. The N-linked (GlcNAc...) asparagine glycan is linked to Asn-32. The 352-residue stretch at 78 to 429 folds into the Peptidase A1 domain; it reads YFTKIKLGSP…DLENEVIGWA (352 aa). The active site involves Asp-96. N-linked (GlcNAc...) asparagine glycosylation is found at Asn-178, Asn-204, and Asn-226. The active site involves Asp-310. A disulfide bridge links Cys-347 with Cys-388. Asn-432 carries N-linked (GlcNAc...) asparagine glycosylation. Ser-456 is lipidated: GPI-anchor amidated serine. Residues 457–482 constitute a propeptide, removed in mature form; sequence AASSVMNGTLVTLLSILIWVFHSFTS. Asn-463 carries N-linked (GlcNAc...) asparagine glycosylation.

Belongs to the peptidase A1 family. In terms of tissue distribution, highly expressed in pollen and pollen tubes. Mostly expressed in roots, flowers and inflorescence, and at lower levels in stems, seedlings and siliques.

The protein resides in the cell membrane. It is found in the cytoplasm. The protein localises to the cytosol. Displays aspartic proteolytic activity. Together with A39, contributes to pollen and ovule development, including the apical cell wall constitution of the growing pollen tubes. This is Aspartic proteinase 36 from Arabidopsis thaliana (Mouse-ear cress).